A 212-amino-acid polypeptide reads, in one-letter code: MQLTQVLAVAILAAGVSAGHRPHRPHSNKLEIQDIKCQSGAPYCCSPDKTKGSTCTKLTGSSVNCDSVVVCCNNNGDKHSPQTCSASVAHPITFVDVDAKFRIDHNKVSHNRVNAKQRRDDKKDYGKNDYGKKDYGKKDYGKKDYGKKEYDPKDHKDYDHKDYDHKDYGHKDYGHKDYGHKDYGHKDYGHDDYGYKGYDDKDYGYKGYDDYY.

An N-terminal signal peptide occupies residues 1-18 (MQLTQVLAVAILAAGVSA). The segment at 108–180 (VSHNRVNAKQ…KDYGHKDYGH (73 aa)) is disordered. Residues 117 to 180 (QRRDDKKDYG…KDYGHKDYGH (64 aa)) are compositionally biased toward basic and acidic residues. The segment at 120 to 210 (DDKKDYGKND…KDYGYKGYDD (91 aa)) is 15 X 5 AA tandem repeats of K-D-Y-G-H. Repeat 1 spans residues 123-127 (KDYGK). One copy of the 2; truncated repeat lies at 128–132 (NDYGK). 3 repeat units span residues 133–137 (KDYGK), 138–142 (KDYGK), and 143–147 (KDYGK). The 6; truncated repeat unit spans residues 148–152 (KEYDP). A run of 5 repeats spans residues 166 to 170 (KDYGH), 171 to 175 (KDYGH), 176 to 180 (KDYGH), 181 to 185 (KDYGH), and 186 to 190 (KDYGH). The stretch at 191–195 (DDYGY) is one 12; truncated repeat. The stretch at 196-200 (KGYDD) is one 13; truncated repeat. One copy of the 14; truncated repeat lies at 201-205 (KDYGY). One copy of the 15; truncated repeat lies at 206–210 (KGYDD).

The protein resides in the secreted. This is an uncharacterized protein from Arthroderma benhamiae (strain ATCC MYA-4681 / CBS 112371) (Trichophyton mentagrophytes).